Consider the following 156-residue polypeptide: Arginine repressor (156 aa).

The protein belongs to the ArgR family.

The protein localises to the cytoplasm. It participates in amino-acid biosynthesis; L-arginine biosynthesis [regulation]. Functionally, regulates arginine biosynthesis genes. The sequence is that of Arginine repressor from Photobacterium profundum (strain SS9).